We begin with the raw amino-acid sequence, 114 residues long: Pole-localizer protein TmaR (114 aa).

Positions 70 to 111 (RDDYESRVDDYTIRNAELSKQRREASTKMKEQKKAHAELLKN) form a coiled coil. Positions 89-114 (KQRREASTKMKEQKKAHAELLKNAEK) are disordered.

The protein belongs to the pole-localizer TmaR family.

It is found in the cytoplasm. Functionally, pole-localizer protein involved in the regulation of several cellular processes. This chain is Pole-localizer protein TmaR, found in Haemophilus influenzae (strain 86-028NP).